A 268-amino-acid chain; its full sequence is Orotidine 5'-phosphate decarboxylase (268 aa).

Substrate-binding positions include aspartate 38, lysine 60–histidine 62, aspartate 92–threonine 101, tyrosine 218, and arginine 236. Catalysis depends on lysine 94, which acts as the Proton donor.

This sequence belongs to the OMP decarboxylase family.

The enzyme catalyses orotidine 5'-phosphate + H(+) = UMP + CO2. It functions in the pathway pyrimidine metabolism; UMP biosynthesis via de novo pathway; UMP from orotate: step 2/2. In Candida parapsilosis (Yeast), this protein is Orotidine 5'-phosphate decarboxylase (URA3).